Consider the following 335-residue polypeptide: Endo-beta-N-acetylglucosaminidase F2 (335 aa).

Positions 1–45 are cleaved as a signal peptide; that stretch reads MKTANFSFALCLSVVIMLFIKCTRSEQDLSVTKDAIAQKSGVTVS. The 261-residue stretch at 61 to 321 folds into the GH18 domain; the sequence is QISAGYYRTW…SSNDNTLRAP (261 aa). O-linked (Man...) serine glycosylation is found at Ser73, Ser89, and Ser143. The active-site Proton donor is the Glu171.

Belongs to the glycosyl hydrolase 18 family. As to quaternary structure, monomer. In terms of processing, carbohydrates at Ser-73, Ser-89 and Ser-143 consist of (2-OMe)Man1-4GlcNAcU1-4GlcU1-4Glc1-4(2-OMe)GlcU1-4[(2-OMe)Rham1-2]Man.

It is found in the secreted. It catalyses the reaction an N(4)-(oligosaccharide-(1-&gt;3)-[oligosaccharide-(1-&gt;6)]-beta-D-Man-(1-&gt;4)-beta-D-GlcNAc-(1-&gt;4)-alpha-D-GlcNAc)-L-asparaginyl-[protein] + H2O = an oligosaccharide-(1-&gt;3)-[oligosaccharide-(1-&gt;6)]-beta-D-Man-(1-&gt;4)-D-GlcNAc + N(4)-(N-acetyl-beta-D-glucosaminyl)-L-asparaginyl-[protein]. In terms of biological role, endohydrolysis of the di-N-acetylchitobiosyl unit in high-mannose glycopeptides and glycoproteins. Complex biantennary glycans are the preferred substrates. Tri- and tetraantennary glycans are not hydrolyzed, and high mannose glycans are very poor substrates. The polypeptide is Endo-beta-N-acetylglucosaminidase F2 (endOF2) (Elizabethkingia meningoseptica (Chryseobacterium meningosepticum)).